Here is a 134-residue protein sequence, read N- to C-terminus: Small ribosomal subunit protein bS16 (134 aa).

A disordered region spans residues L81–S134. Residues K91 to E101 are compositionally biased toward basic and acidic residues. Low complexity predominate over residues A116–S134.

Belongs to the bacterial ribosomal protein bS16 family.

The chain is Small ribosomal subunit protein bS16 from Chelativorans sp. (strain BNC1).